Consider the following 977-residue polypeptide: Receptor protein-tyrosine kinase CEPR2 (977 aa).

The signal sequence occupies residues 1 to 31 (MSRRPDLLRGSVVATVAATFLLFIFPPNVES). Residues 32 to 620 (TVEKQALFRF…NVKRNSSLDG (589 aa)) lie on the Extracellular side of the membrane. Asparagine 85 carries N-linked (GlcNAc...) asparagine glycosylation. LRR repeat units lie at residues 97–121 (LTKL…IVNC), 122–146 (KNLK…PLKS), 148–167 (EILD…WIGN), 168–192 (MNQL…SIGG), 193–217 (LKKL…IFDL), 219–241 (ALDT…ISRL), 242–265 (VNLT…IKNL), 266–288 (TRLR…ELGV), 290–312 (KELR…GFGD), 313–338 (LSHL…GRFS), 340–361 (LDTV…LCQN), 363–385 (KLQF…YGEC), 386–409 (KSLL…FWSL), 411–433 (LAKM…IGLS), 434–457 (TELS…LGRL), 458–481 (TNIE…VGDL), 482–504 (KELS…ELKN), 506–529 (VKLV…LSQI), 530–553 (ASLN…LVKL), and 555–576 (LSFI…LLAV). An N-linked (GlcNAc...) asparagine glycan is attached at asparagine 128. N-linked (GlcNAc...) asparagine glycosylation is present at asparagine 205. N-linked (GlcNAc...) asparagine glycosylation is found at asparagine 243, asparagine 251, and asparagine 264. Asparagine 301 and asparagine 325 each carry an N-linked (GlcNAc...) asparagine glycan. Asparagine 469 and asparagine 491 each carry an N-linked (GlcNAc...) asparagine glycan. N-linked (GlcNAc...) asparagine glycosylation occurs at asparagine 615. Residues 621–641 (TLLFLALAIVVVVLVSGLFAL) traverse the membrane as a helical segment. Over 642–977 (RYRVVKIREL…SQDTTGKITV (336 aa)) the chain is Cytoplasmic. Residues 683–965 (LDEDHVIGSG…RKLDDADPCV (283 aa)) enclose the Protein kinase domain. Residues 689–697 (IGSGSAGKV) and lysine 712 contribute to the ATP site. Tyrosine 801 carries the phosphotyrosine modification. The active-site Proton acceptor is aspartate 814. Serine 846 bears the Phosphoserine mark. 2 positions are modified to phosphotyrosine: tyrosine 854 and tyrosine 861.

The protein belongs to the protein kinase superfamily. Ser/Thr protein kinase family. Interacts with the root-derived peptide CEP1. Binds to the ammonium transporter AMT1-1. Expressed in mature leaves, primary roots, and the root tips of both primary and lateral roots.

The protein resides in the cell membrane. It carries out the reaction L-tyrosyl-[protein] + ATP = O-phospho-L-tyrosyl-[protein] + ADP + H(+). In terms of biological role, receptor kinase involved in the perception of C-terminally encoded plant signaling peptide (CEP) and subsequent regulation of root and shoot development. Together with CEPR1, mediates systemic nitrogen (N)-demand signaling upon the perception of root-derived peptides (e.g. CEP1) via the up-regulation of genes involved in N uptake and assimilation pathways. This chain is Receptor protein-tyrosine kinase CEPR2, found in Arabidopsis thaliana (Mouse-ear cress).